The primary structure comprises 156 residues: Beta-defensin 125 (156 aa).

An N-terminal signal peptide occupies residues 1–20 (MNILMLTFIICGLLTRVTKG). 3 disulfides stabilise this stretch: cysteine 27/cysteine 55, cysteine 35/cysteine 49, and cysteine 39/cysteine 56. Positions 68 to 156 (PAFPVIHLED…PPSQTALTHN (89 aa)) are excised as a propeptide. Residues 108-156 (GETMTPETNTPETTMPPSEATTPETTMPPSETATSETMPPPSQTALTHN) are disordered. The span at 109-144 (ETMTPETNTPETTMPPSEATTPETTMPPSETATSET) shows a compositional bias: low complexity.

It belongs to the beta-defensin family.

The protein localises to the secreted. Has antibacterial activity. This is Beta-defensin 125 (DEFB125) from Homo sapiens (Human).